The sequence spans 355 residues: Protein RecA (355 aa).

An ATP-binding site is contributed by 72–79; it reads GPESSGKT.

This sequence belongs to the RecA family.

It is found in the cytoplasm. In terms of biological role, can catalyze the hydrolysis of ATP in the presence of single-stranded DNA, the ATP-dependent uptake of single-stranded DNA by duplex DNA, and the ATP-dependent hybridization of homologous single-stranded DNAs. It interacts with LexA causing its activation and leading to its autocatalytic cleavage. This is Protein RecA from Wolbachia sp. subsp. Brugia malayi (strain TRS).